We begin with the raw amino-acid sequence, 189 residues long: Elongation factor P (189 aa).

The protein belongs to the elongation factor P family.

Its subcellular location is the cytoplasm. Its pathway is protein biosynthesis; polypeptide chain elongation. Involved in peptide bond synthesis. Stimulates efficient translation and peptide-bond synthesis on native or reconstituted 70S ribosomes in vitro. Probably functions indirectly by altering the affinity of the ribosome for aminoacyl-tRNA, thus increasing their reactivity as acceptors for peptidyl transferase. This chain is Elongation factor P, found in Onion yellows phytoplasma (strain OY-M).